The sequence spans 483 residues: Altronate oxidoreductase (483 aa).

18 to 29 is a binding site for NAD(+); the sequence is IIQFGEGNFLRA.

It belongs to the mannitol dehydrogenase family. UxaB subfamily.

It catalyses the reaction D-altronate + NAD(+) = keto-D-tagaturonate + NADH + H(+). It participates in carbohydrate metabolism; pentose and glucuronate interconversion. The sequence is that of Altronate oxidoreductase from Enterobacter sp. (strain 638).